Reading from the N-terminus, the 568-residue chain is Proline--tRNA ligase (568 aa).

Belongs to the class-II aminoacyl-tRNA synthetase family. ProS type 1 subfamily. Homodimer.

Its subcellular location is the cytoplasm. The catalysed reaction is tRNA(Pro) + L-proline + ATP = L-prolyl-tRNA(Pro) + AMP + diphosphate. Functionally, catalyzes the attachment of proline to tRNA(Pro) in a two-step reaction: proline is first activated by ATP to form Pro-AMP and then transferred to the acceptor end of tRNA(Pro). As ProRS can inadvertently accommodate and process non-cognate amino acids such as alanine and cysteine, to avoid such errors it has two additional distinct editing activities against alanine. One activity is designated as 'pretransfer' editing and involves the tRNA(Pro)-independent hydrolysis of activated Ala-AMP. The other activity is designated 'posttransfer' editing and involves deacylation of mischarged Ala-tRNA(Pro). The misacylated Cys-tRNA(Pro) is not edited by ProRS. The protein is Proline--tRNA ligase of Macrococcus caseolyticus (strain JCSC5402) (Macrococcoides caseolyticum).